A 443-amino-acid chain; its full sequence is ATP-dependent protease ATPase subunit HslU (443 aa).

Residues isoleucine 18, 60–65 (GVGKTE), aspartate 256, glutamate 321, and arginine 393 contribute to the ATP site.

Belongs to the ClpX chaperone family. HslU subfamily. A double ring-shaped homohexamer of HslV is capped on each side by a ring-shaped HslU homohexamer. The assembly of the HslU/HslV complex is dependent on binding of ATP.

It is found in the cytoplasm. ATPase subunit of a proteasome-like degradation complex; this subunit has chaperone activity. The binding of ATP and its subsequent hydrolysis by HslU are essential for unfolding of protein substrates subsequently hydrolyzed by HslV. HslU recognizes the N-terminal part of its protein substrates and unfolds these before they are guided to HslV for hydrolysis. This Vibrio cholerae serotype O1 (strain ATCC 39315 / El Tor Inaba N16961) protein is ATP-dependent protease ATPase subunit HslU.